Here is a 77-residue protein sequence, read N- to C-terminus: Acyl carrier protein (77 aa).

The Carrier domain occupies 2–77 (SDVAERVKKI…DAIDFITANS (76 aa)). Ser-37 bears the O-(pantetheine 4'-phosphoryl)serine mark.

This sequence belongs to the acyl carrier protein (ACP) family. 4'-phosphopantetheine is transferred from CoA to a specific serine of apo-ACP by AcpS. This modification is essential for activity because fatty acids are bound in thioester linkage to the sulfhydryl of the prosthetic group.

It localises to the cytoplasm. It functions in the pathway lipid metabolism; fatty acid biosynthesis. Functionally, carrier of the growing fatty acid chain in fatty acid biosynthesis. In Paramagnetospirillum magneticum (strain ATCC 700264 / AMB-1) (Magnetospirillum magneticum), this protein is Acyl carrier protein.